The following is a 543-amino-acid chain: Thiamine transport system permease protein ThiP (543 aa).

Helical transmembrane passes span 19 to 39 (VAGG…LLAL), 64 to 84 (FTIW…IPIA), 102 to 122 (LFAL…TSIY), 142 to 162 (DIYG…PLAV), 205 to 225 (GMIG…LTLG), 250 to 270 (AVAL…ILRL), 300 to 320 (IIVI…VVVS), 343 to 363 (LALG…LVAA), 379 to 399 (GASL…FILL), 406 to 426 (FVMA…PFAV), 468 to 488 (GMAF…IALF), and 510 to 530 (FDAA…MMIA). The region spanning 62-266 (ARFTIWQAVA…QLALTLLILL (205 aa)) is the ABC transmembrane type-1 1 domain. The ABC transmembrane type-1 2 domain maps to 339–530 (IATSLALGFS…VLCLALMMIA (192 aa)).

This sequence belongs to the binding-protein-dependent transport system permease family. CysTW subfamily. The complex is composed of two ATP-binding proteins (ThiQ), two transmembrane proteins (ThiP) and a solute-binding protein (ThiB).

It is found in the cell inner membrane. Part of the ABC transporter complex ThiBPQ involved in thiamine import. Probably responsible for the translocation of the substrate across the membrane. The polypeptide is Thiamine transport system permease protein ThiP (thiP) (Brucella suis biovar 1 (strain 1330)).